The following is an 88-amino-acid chain: Small ribosomal subunit protein uS15 (88 aa).

Belongs to the universal ribosomal protein uS15 family. Part of the 30S ribosomal subunit. Forms a bridge to the 50S subunit in the 70S ribosome, contacting the 23S rRNA.

Functionally, one of the primary rRNA binding proteins, it binds directly to 16S rRNA where it helps nucleate assembly of the platform of the 30S subunit by binding and bridging several RNA helices of the 16S rRNA. Its function is as follows. Forms an intersubunit bridge (bridge B4) with the 23S rRNA of the 50S subunit in the ribosome. The sequence is that of Small ribosomal subunit protein uS15 from Leptospira borgpetersenii serovar Hardjo-bovis (strain JB197).